A 529-amino-acid chain; its full sequence is Bifunctional purine biosynthesis protein PurH (529 aa).

Residues 1 to 148 (MQQRRPVRRA…KNHKDVAIVV (148 aa)) form the MGS-like domain.

Belongs to the PurH family.

It carries out the reaction (6R)-10-formyltetrahydrofolate + 5-amino-1-(5-phospho-beta-D-ribosyl)imidazole-4-carboxamide = 5-formamido-1-(5-phospho-D-ribosyl)imidazole-4-carboxamide + (6S)-5,6,7,8-tetrahydrofolate. It catalyses the reaction IMP + H2O = 5-formamido-1-(5-phospho-D-ribosyl)imidazole-4-carboxamide. The protein operates within purine metabolism; IMP biosynthesis via de novo pathway; 5-formamido-1-(5-phospho-D-ribosyl)imidazole-4-carboxamide from 5-amino-1-(5-phospho-D-ribosyl)imidazole-4-carboxamide (10-formyl THF route): step 1/1. It participates in purine metabolism; IMP biosynthesis via de novo pathway; IMP from 5-formamido-1-(5-phospho-D-ribosyl)imidazole-4-carboxamide: step 1/1. This Salmonella agona (strain SL483) protein is Bifunctional purine biosynthesis protein PurH.